The chain runs to 339 residues: Ribosomal RNA small subunit methyltransferase H (339 aa).

S-adenosyl-L-methionine is bound by residues 52-54 (GGH), aspartate 71, phenylalanine 98, aspartate 130, and glutamine 137.

It belongs to the methyltransferase superfamily. RsmH family.

It localises to the cytoplasm. The enzyme catalyses cytidine(1402) in 16S rRNA + S-adenosyl-L-methionine = N(4)-methylcytidine(1402) in 16S rRNA + S-adenosyl-L-homocysteine + H(+). In terms of biological role, specifically methylates the N4 position of cytidine in position 1402 (C1402) of 16S rRNA. This is Ribosomal RNA small subunit methyltransferase H from Corynebacterium diphtheriae (strain ATCC 700971 / NCTC 13129 / Biotype gravis).